A 2171-amino-acid chain; its full sequence is ATP-binding cassette sub-family C member Sur (2171 aa).

Topologically, residues 1–36 (MKQLFNIIHCDHLNGHVRSIYDNLNTDICGIDRVRR) are extracellular. Residues 37–57 (VFTFFSIFLLLFGLMFVCSRY) traverse the membrane as a helical segment. The Cytoplasmic segment spans residues 58–71 (KKCHKTLLTFHNGR). A helical transmembrane segment spans residues 72-92 (AAISLLLLALNSFDLARIFLP). At 93 to 112 (HQNVRNLNRLFQSSPRDLNY) the chain is on the extracellular side. The chain crosses the membrane as a helical span at residues 113-133 (LVVIGSGELWNALFSTLLTLM). Residues 134–145 (LMLYHRMVERKK) are Cytoplasmic-facing. Residues 146 to 166 (ATVFLYASTAVEALTFALLSN) traverse the membrane as a helical segment. Residues 167 to 182 (ELFELVRYEDFLELQT) are Extracellular-facing. Residues 183 to 203 (CLVAMSAMCMVSLAMLDGLTV) traverse the membrane as a helical segment. The Cytoplasmic portion of the chain corresponds to 204 to 224 (YKECYHDDYLDDYGKIGYKHS). A helical transmembrane segment spans residues 225-245 (MATFYSKSCFWWLTPLLWLGY). The Extracellular segment spans residues 246 to 299 (KEPLELEDLGQMKLEDSARSHYDHFLYIYTEKKKKSNSSPSLWYCYIKNSWQMF). The chain crosses the membrane as a helical span at residues 300–320 (ALGGILKLAGDLFALIGPLAI). Topologically, residues 321–447 (QKIVEYIEQL…MTEDTRNIME (127 aa)) are cytoplasmic. One can recognise an ABC transmembrane type-1 1 domain in the interval 344–622 (NEVANVLLST…FPITVPIIIA (279 aa)). Residues 388–434 (DSSDSAGQVQSTSSTSDEKQKNDDSMATPEHVDNPSEPNISHDIGSI) form a disordered region. Residues 389 to 402 (SSDSAGQVQSTSST) show a composition bias toward polar residues. The segment covering 403–421 (SDEKQKNDDSMATPEHVDN) has biased composition (basic and acidic residues). A helical membrane pass occupies residues 448 to 468 (FFLIIHYAWAIPFKIAVVIYL). Over 469-474 (LYMNLG) the chain is Extracellular. Residues 475–495 (ISAVIGSIACIVIMTPLQFFI) form a helical membrane-spanning segment. Residues 496-562 (GNAMSKNAEV…KDATFWTLMA (67 aa)) lie on the Cytoplasmic side of the membrane. The helical transmembrane segment at 563–583 (VLTHIATVLITFVTLGVYVWL) threads the bilayer. Residues 584-600 (HRDQEFDLNASRLFSSL) lie on the Extracellular side of the membrane. Residues 601-621 (ALFQQLTVPLLIFPITVPIII) form a helical membrane-spanning segment. Topologically, residues 622–1409 (AARVSTRRLE…KYGKISDDIY (788 aa)) are cytoplasmic. The ABC transporter 1 domain occupies 785 to 1014 (VSINDGLFTW…QPRITAEWNA (230 aa)). 822-829 (GKNGSGKT) contributes to the ATP binding site. Residues 1141–1151 (RRRHTLGRRGS) are compositionally biased toward basic residues. 2 disordered regions span residues 1141-1177 (RRRH…SISG) and 1209-1265 (PRVQ…DHVR). Residues 1160 to 1176 (LSGLSTLTATSESSSIS) are compositionally biased toward low complexity. The span at 1212-1232 (QSWQPPQHVTHHQPLSRNASS) shows a compositional bias: polar residues. Over residues 1242-1251 (DVKKSEEARR) the composition is skewed to basic and acidic residues. The helical transmembrane segment at 1410 to 1430 (LMYIRAAGLPIITIFFITALI) threads the bilayer. The 295-residue stretch at 1421-1715 (ITIFFITALI…AVTKSPSELR (295 aa)) folds into the ABC transmembrane type-1 2 domain. Topologically, residues 1431–1468 (WQCLRVYTDIWLQQWSNVHGRVASKGHVVLHPSEQDHE) are extracellular. A helical transmembrane segment spans residues 1469–1489 (VTYYFRMYAAISCVCIIMALV). Residues 1490–1558 (STPAGQYAGC…QRLLQFTLLC (69 aa)) lie on the Cytoplasmic side of the membrane. The helical transmembrane segment at 1559–1579 (LSAILINVTITPWILVLTLPI) threads the bilayer. At 1580–1655 (CGAYYLIQKF…YALLNTSHRW (76 aa)) the chain is on the extracellular side. The helical transmembrane segment at 1656 to 1676 (LGVSLDYLGGCIVFVATVTAL) threads the bilayer. The Cytoplasmic portion of the chain corresponds to 1677–1718 (TAASVSCRRHYEATTSPSASASPSPFETYAVTKSPSELRPSP). Residues 1719–1739 (SLVGLAINYTLLVPIYLNWVV) traverse the membrane as a helical segment. The Extracellular portion of the chain corresponds to 1740–2171 (KLLADMEMYA…GLLEKGASKW (432 aa)). A compositionally biased stretch (acidic residues) spans 1766 to 1778 (ADADADADADVDA). Disordered stretches follow at residues 1766 to 1844 (ADAD…GHEN) and 1866 to 1902 (NFHH…DKDK). Composition is skewed to basic and acidic residues over residues 1793–1804 (EVDRSSQSDAGD) and 1887–1902 (VIKD…DKDK). The region spanning 1930–2165 (IHFDNVSLRY…EGSVFRGLLE (236 aa)) is the ABC transporter 2 domain. 1964–1971 (GRTGSGKS) lines the ATP pocket.

The protein belongs to the ABC transporter superfamily. ABCC family. Conjugate transporter (TC 3.A.1.208) subfamily. Highly expressed in adult heart. Detected at lower levels in head and abdomen.

The protein localises to the membrane. Its function is as follows. May function as regulatory subunit of ATP-sensitive potassium channels (KATP) and form KATP channels with a member of the ATP-sensitive inward rectifier potassium channel family. May also have channel activity by itself (in vitro). May protect the heart during hypoxia. May protect against heart failure under conditions of tachycardic stress. This chain is ATP-binding cassette sub-family C member Sur (Sur), found in Drosophila melanogaster (Fruit fly).